Consider the following 106-residue polypeptide: Malonate decarboxylase acyl carrier protein (106 aa).

Ser28 bears the O-(phosphoribosyl dephospho-coenzyme A)serine mark.

This sequence belongs to the MdcC family. Post-translationally, covalently binds the prosthetic group of malonate decarboxylase.

The protein localises to the cytoplasm. Subunit of malonate decarboxylase, it is an acyl carrier protein to which acetyl and malonyl thioester residues are bound via a 2'-(5''-phosphoribosyl)-3'-dephospho-CoA prosthetic group and turn over during the catalytic mechanism. The polypeptide is Malonate decarboxylase acyl carrier protein (Stenotrophomonas maltophilia (strain K279a)).